The following is a 1488-amino-acid chain: Chromosome partition protein MukB (1488 aa).

34–41 (GGNGAGKS) lines the ATP pocket. 3 coiled-coil regions span residues 326 to 413 (LEAD…QTRA), 444 to 472 (LDTF…QTAH), and 509 to 602 (RHLA…RRAP). The tract at residues 666–783 (PGGAEDQRLN…SLPIFGRAAR (118 aa)) is flexible hinge. 3 coiled-coil regions span residues 835–923 (EAEI…AKLE), 977–1116 (EMLS…AKAG), and 1209–1265 (VEAI…LQSV).

It belongs to the SMC family. MukB subfamily. In terms of assembly, homodimerization via its hinge domain. Binds to DNA via its C-terminal region. Interacts, and probably forms a ternary complex, with MukE and MukF via its C-terminal region. The complex formation is stimulated by calcium or magnesium. Interacts with tubulin-related protein FtsZ.

It is found in the cytoplasm. Its subcellular location is the nucleoid. Plays a central role in chromosome condensation, segregation and cell cycle progression. Functions as a homodimer, which is essential for chromosome partition. Involved in negative DNA supercoiling in vivo, and by this means organize and compact chromosomes. May achieve or facilitate chromosome segregation by condensation DNA from both sides of a centrally located replisome during cell division. The sequence is that of Chromosome partition protein MukB from Salmonella paratyphi C (strain RKS4594).